We begin with the raw amino-acid sequence, 302 residues long: Deoxyhypusine hydroxylase (302 aa).

Methionine 1 carries the post-translational modification N-acetylmethionine. HEAT-like PBS-type repeat units follow at residues 54 to 80 (LKHELAYCLGQMRDARAIPVLADVLQD), 87 to 113 (VRHEAGEALGAIGNPEVLGLLKQYSTD), 175 to 201 (ERYRAMFALRNVGGKEAALALAEGLQC), 206 to 232 (FRHEVGYVLGQLQHEAAVPGLAATLAR), and 239 to 265 (VRHECAEALGAIARPACLAALREHIED). Fe cation is bound by residues histidine 56, histidine 89, and glutamate 90. Histidine 208, histidine 241, and glutamate 242 together coordinate Fe cation.

The protein belongs to the deoxyhypusine hydroxylase family. Requires Fe(2+) as cofactor.

It carries out the reaction [eIF5A protein]-deoxyhypusine + AH2 + O2 = [eIF5A protein]-hypusine + A + H2O. The protein operates within protein modification; eIF5A hypusination. Catalyzes the hydroxylation of the N(6)-(4-aminobutyl)-L-lysine intermediate produced by deoxyhypusine synthase/DHPS on a critical lysine of the eukaryotic translation initiation factor 5A/eIF-5A. This is the second step of the post-translational modification of that lysine into an unusual amino acid residue named hypusine. Hypusination is unique to mature eIF-5A factor and is essential for its function. This Mus musculus (Mouse) protein is Deoxyhypusine hydroxylase.